Here is an 842-residue protein sequence, read N- to C-terminus: Homeobox-leucine zipper protein REVOLUTA (842 aa).

The segment at 1-20 (MEMAVANHRERSSDSMNRHL) is disordered. A compositionally biased stretch (basic and acidic residues) spans 7–20 (NHRERSSDSMNRHL). A DNA-binding region (homeobox) is located at residues 22–85 (SSGKYVRYTA…NRRCRDKQRK (64 aa)). The stretch at 90-121 (LQSVNRKLSAMNKLLMEENDRLQKQVSQLVCE) forms a coiled coil. The 229-residue stretch at 151-379 (DANSPAGLLS…LAQESNGEVV (229 aa)) folds into the START domain.

Belongs to the HD-ZIP homeobox family. Class III subfamily. As to quaternary structure, homodimer. Heterodimer with ZPR1, ZPR2, ZPR3 or ZPR4. Interacts with ESR1 and ESR2. Interacts with ZPR1, ZPR2, ZPR3 and ZPR4. Heterodimerization with ZPR3 prevents DNA binding by REV. Expressed in the interfascicular regions of stem and vascular bundles of young roots and leaves.

The protein localises to the nucleus. In terms of biological role, probable transcription factor involved in the regulation of interfascicular fiber (cortical cells) and secondary xylem differentiation in the inflorescence stems. Required for lateral shoot meristems (LSMs) and flower meristems (FMs) initiation. May be involved in the determination of vascular patterning and organ polarity. Directly regulates the expression of AGO10, ZPR1, ZPR2, ZPR3 and ZPR4. Required to regulate adaxial-abaxial polarity and leaf axial patterning. The polypeptide is Homeobox-leucine zipper protein REVOLUTA (Arabidopsis thaliana (Mouse-ear cress)).